Reading from the N-terminus, the 201-residue chain is Protein TV1384 (201 aa).

Residues 11–200 enclose the AMMECR1 domain; it reads DIGAKAVMLA…EIEPNGKVEQ (190 aa).

This is Protein TV1384 from Thermoplasma volcanium (strain ATCC 51530 / DSM 4299 / JCM 9571 / NBRC 15438 / GSS1).